A 273-amino-acid chain; its full sequence is UPF0380 protein YafZ (273 aa).

It belongs to the UPF0380 family.

This is UPF0380 protein YafZ (yafZ) from Escherichia coli (strain K12).